Here is a 554-residue protein sequence, read N- to C-terminus: MTSMQAIPDITATPAWDALRRHHDEIGATHLRQFFADNPNRGRELVITVGDLYIDYSKHRITHDTVQLLVDLARAANLEQRRDQMLAGVHVNTSENRSVLHTALRLPRDTELIVDGQNVVQDVHAVLDVMGDFTDRLRSGEWTGATGKRINTVVNIGIGGSDLGPVMVYQALRHYADAGISARFVSNIDPADLTAKLSDLEPGTTLFIVASKTFSTLETLTNATAARRWLTDALGEAAVSKHFVAVSTNKRLVKDFGINTANMFGFWEWVGGRYSVDSAIGLSLMAVVGRESFADFLSGFHIVDQHFQNAPLESNAPVLLGLIGLWYSDFLGAQSRAVLPYSNDLARFAAYLQQLTMESNGKSTRADGTPVTTNTGEIYWGETGTNGQHAFYQLLHQGTRLVPADFIGFSQPIDDLPTVDGIGSMHDLLMSNFFAQTQVLAFGKTAEEIAAEGTPAEVVPHKVMPGNRPTTSILANRLTPSVLGQLIALYEHQVFTEGVIWGIDSFDQWGVELGKKQAEALLPVITGNASPAQQLDSSTDTLVRRYRTERGRTS.

The active-site Proton donor is the Glu358. Residues His389 and Lys515 contribute to the active site.

It belongs to the GPI family.

Its subcellular location is the cytoplasm. The catalysed reaction is alpha-D-glucose 6-phosphate = beta-D-fructose 6-phosphate. Its pathway is carbohydrate biosynthesis; gluconeogenesis. It participates in carbohydrate degradation; glycolysis; D-glyceraldehyde 3-phosphate and glycerone phosphate from D-glucose: step 2/4. In terms of biological role, catalyzes the reversible isomerization of glucose-6-phosphate to fructose-6-phosphate. This Mycobacterium leprae (strain Br4923) protein is Glucose-6-phosphate isomerase.